A 165-amino-acid chain; its full sequence is U11/U12 small nuclear ribonucleoprotein 25 kDa protein (165 aa).

Positions 52–137 (MRLSVVKLDG…IRNNSQVTFM (86 aa)) constitute a Ubiquitin-like domain. Positions 145–165 (RGRHSKRKKHRLFRSLHKTSS) are disordered.

As to quaternary structure, component of the U11/U12 snRNPs that are part of the U12-type spliceosome.

Its subcellular location is the nucleus. This Arabidopsis thaliana (Mouse-ear cress) protein is U11/U12 small nuclear ribonucleoprotein 25 kDa protein (SNRNP25).